We begin with the raw amino-acid sequence, 224 residues long: Flagellar L-ring protein (224 aa).

A signal peptide spans 1 to 15; it reads MARYLVLAVALLLAA. Residue C16 is the site of N-palmitoyl cysteine attachment. A lipid anchor (S-diacylglycerol cysteine) is attached at C16.

This sequence belongs to the FlgH family. As to quaternary structure, the basal body constitutes a major portion of the flagellar organelle and consists of four rings (L,P,S, and M) mounted on a central rod.

It localises to the cell outer membrane. Its subcellular location is the bacterial flagellum basal body. Assembles around the rod to form the L-ring and probably protects the motor/basal body from shearing forces during rotation. The protein is Flagellar L-ring protein of Shewanella baltica (strain OS223).